A 484-amino-acid chain; its full sequence is Glutamyl-tRNA(Gln) amidotransferase subunit A (484 aa).

Residues Lys76 and Ser151 each act as charge relay system in the active site. Ser175 acts as the Acyl-ester intermediate in catalysis.

This sequence belongs to the amidase family. GatA subfamily. Heterotrimer of A, B and C subunits.

It carries out the reaction L-glutamyl-tRNA(Gln) + L-glutamine + ATP + H2O = L-glutaminyl-tRNA(Gln) + L-glutamate + ADP + phosphate + H(+). Allows the formation of correctly charged Gln-tRNA(Gln) through the transamidation of misacylated Glu-tRNA(Gln) in organisms which lack glutaminyl-tRNA synthetase. The reaction takes place in the presence of glutamine and ATP through an activated gamma-phospho-Glu-tRNA(Gln). This is Glutamyl-tRNA(Gln) amidotransferase subunit A from Hahella chejuensis (strain KCTC 2396).